The following is a 499-amino-acid chain: Maturase K (499 aa).

This sequence belongs to the intron maturase 2 family. MatK subfamily.

The protein resides in the plastid. It is found in the chloroplast. Usually encoded in the trnK tRNA gene intron. Probably assists in splicing its own and other chloroplast group II introns. In Ceratozamia mexicana (Mexican horncone), this protein is Maturase K.